The primary structure comprises 335 residues: uncharacterized protein (335 aa).

This is an uncharacterized protein from Methanocaldococcus jannaschii (strain ATCC 43067 / DSM 2661 / JAL-1 / JCM 10045 / NBRC 100440) (Methanococcus jannaschii).